We begin with the raw amino-acid sequence, 189 residues long: Ribonuclease HII (189 aa).

Positions 1 to 189 (MIAGVDEAGR…PVRRALNIDC (189 aa)) constitute an RNase H type-2 domain. Positions 6, 7, and 98 each coordinate a divalent metal cation.

It belongs to the RNase HII family. It depends on Mn(2+) as a cofactor. The cofactor is Mg(2+).

Its subcellular location is the cytoplasm. The enzyme catalyses Endonucleolytic cleavage to 5'-phosphomonoester.. Functionally, endonuclease that specifically degrades the RNA of RNA-DNA hybrids. The polypeptide is Ribonuclease HII (Acinetobacter baylyi (strain ATCC 33305 / BD413 / ADP1)).